The following is a 101-amino-acid chain: Putative pterin-4-alpha-carbinolamine dehydratase (101 aa).

This sequence belongs to the pterin-4-alpha-carbinolamine dehydratase family.

It catalyses the reaction (4aS,6R)-4a-hydroxy-L-erythro-5,6,7,8-tetrahydrobiopterin = (6R)-L-erythro-6,7-dihydrobiopterin + H2O. This is Putative pterin-4-alpha-carbinolamine dehydratase from Rhizobium leguminosarum bv. trifolii (strain WSM2304).